The following is a 21-amino-acid chain: Glucose-1-phosphate adenylyltransferase large subunit (21 aa).

Positions 1–21 are disordered; sequence SVTADNASETKVREIGQEKSS. The segment covering 8–21 has biased composition (basic and acidic residues); sequence SETKVREIGQEKSS.

Belongs to the bacterial/plant glucose-1-phosphate adenylyltransferase family. Heterotetramer.

Its subcellular location is the plastid. The protein localises to the chloroplast. It is found in the amyloplast. The enzyme catalyses alpha-D-glucose 1-phosphate + ATP + H(+) = ADP-alpha-D-glucose + diphosphate. It functions in the pathway glycan biosynthesis; starch biosynthesis. Activated by 3'phosphoglycerate, inhibited by orthophosphate. Allosteric regulation. Its function is as follows. This protein plays a role in synthesis of starch. It catalyzes the synthesis of the activated glycosyl donor, ADP-glucose from Glc-1-P and ATP. In Spinacia oleracea (Spinach), this protein is Glucose-1-phosphate adenylyltransferase large subunit.